The sequence spans 79 residues: Translational regulator CsrA (79 aa).

It belongs to the CsrA/RsmA family. In terms of assembly, homodimer; the beta-strands of each monomer intercalate to form a hydrophobic core, while the alpha-helices form wings that extend away from the core.

It is found in the cytoplasm. Its function is as follows. A translational regulator that binds mRNA to regulate translation initiation and/or mRNA stability. Usually binds in the 5'-UTR at or near the Shine-Dalgarno sequence preventing ribosome-binding, thus repressing translation. Its main target seems to be the major flagellin gene, while its function is anatagonized by FliW. The sequence is that of Translational regulator CsrA from Solidesulfovibrio magneticus (strain ATCC 700980 / DSM 13731 / RS-1) (Desulfovibrio magneticus).